A 592-amino-acid chain; its full sequence is MLIRCFHIKMALVTCFHSMLFLSAVVFIFSLDVNIRGVEASHQVFPELQSVSAVNVQLVHRTGYHFQPKKHWINDPNGPMYYKGFYHLFYQYNPKGAVWGNIVWAHSISKDLINWVALEPAIFPSKPFDKYGCWSGSATVLPGGKPVIMYTGIVTPSPVNTQVQNFAVPANYSDPYLREWIKPDNNPIVRARSENSSSFRDPTTAWFDGVHWKILVGSRRKHRGIAYLYRSRNFLKWTKAKHPLHSKDRTGMWECLDFYPVAPKGMNGLDTSVTGQDIKHVLKVSLYSTRYEYYTVGEYDRDNDIYVPDNTSVDGWAGLRYDYGNFYASKTFFDPDKQRRILWGWANESDSKQDDVQKGWAGIQLIPRKLWLDPNGKQLIQWPIEEIQLLRGQNVHMGSQVLNTGEHIEVKGVTAAQADVDATFSFKSLDRAEWFDPNWAKLDALDVCDWMGSTVRGGLGPFGFLTLASEKLEEYTPVFFRVFKTKDKLKVLMCSDAKRSSTTAEGLYKPPFAGYVDVDLSDKKISLRSLIDNSVVESFGAHGRTCITSRVYPKIAIYNNAHVFVFNNGTEAITIDSLDAWSMKAPSLMNNN.

A signal peptide spans 1–40 (MLIRCFHIKMALVTCFHSMLFLSAVVFIFSLDVNIRGVEA). Residue aspartate 75 is part of the active site. N-linked (GlcNAc...) asparagine glycosylation is found at asparagine 171, asparagine 195, asparagine 310, asparagine 347, and asparagine 568.

This sequence belongs to the glycosyl hydrolase 32 family.

It localises to the secreted. Its subcellular location is the cell wall. The catalysed reaction is Hydrolysis of terminal non-reducing beta-D-fructofuranoside residues in beta-D-fructofuranosides.. In terms of biological role, may play an important role in phloem unloading and in stress response. This Daucus carota (Wild carrot) protein is Beta-fructofuranosidase, insoluble isoenzyme 2 (INV2).